We begin with the raw amino-acid sequence, 561 residues long: Type 2 DNA topoisomerase 6 subunit B (561 aa).

Residues Asn46, Asp78, 99 to 100 (TK), 109 to 116 (GQQGIGIS), and Lys471 each bind ATP.

Belongs to the TOP6B family. As to quaternary structure, homodimer. Heterotetramer of two Top6A and two Top6B chains.

It carries out the reaction ATP-dependent breakage, passage and rejoining of double-stranded DNA.. Its function is as follows. Relaxes both positive and negative superturns and exhibits a strong decatenase activity. This chain is Type 2 DNA topoisomerase 6 subunit B, found in Thermococcus gammatolerans (strain DSM 15229 / JCM 11827 / EJ3).